The chain runs to 130 residues: Large ribosomal subunit protein bL19 (130 aa).

The protein belongs to the bacterial ribosomal protein bL19 family.

In terms of biological role, this protein is located at the 30S-50S ribosomal subunit interface and may play a role in the structure and function of the aminoacyl-tRNA binding site. The sequence is that of Large ribosomal subunit protein bL19 from Mycoplasma capricolum subsp. capricolum (strain California kid / ATCC 27343 / NCTC 10154).